Here is a 127-residue protein sequence, read N- to C-terminus: MLWPFRWVWWKRVLTSQTRAPAKPNPLTVPPTCTWWSLRKLPNPTKLDDDLKNLLDPNEVRARMLKSFGTENFTQPQPQPQALKTTTPVFGTSSGNLGSVLSGGGYHAGLKHHQSTVTRSTGEWVDR.

The segment at 70 to 90 (TENFTQPQPQPQALKTTTPVF) is disordered.

The protein belongs to the adhesin P1 family.

The protein is Putative adhesin P1-like protein MPN_203 of Mycoplasma pneumoniae (strain ATCC 29342 / M129 / Subtype 1) (Mycoplasmoides pneumoniae).